The following is a 509-amino-acid chain: 3-ketoacyl-CoA synthase 11 (509 aa).

Transmembrane regions (helical) follow at residues 36 to 56 and 75 to 95; these read LITHGMYLFLSPLVLVIAAQI and LISVVVCSMLLVFLMTIYFMT. The FAE domain maps to 92-381; sequence YFMTRPRPVY…FFATLVGRKL (290 aa). Catalysis depends on residues Cys-236, His-315, His-399, His-403, and Asn-436.

It belongs to the thiolase-like superfamily. Chalcone/stilbene synthases family. As to expression, only expressed in guard cells. Expressed in siliques, flowers, leaves, stems, roots and seedlings.

It is found in the membrane. The catalysed reaction is a very-long-chain acyl-CoA + malonyl-CoA + H(+) = a very-long-chain 3-oxoacyl-CoA + CO2 + CoA. Its pathway is lipid metabolism; fatty acid biosynthesis. Active on both saturated and mono-unsaturated acyl chains C16 to C20. The sequence is that of 3-ketoacyl-CoA synthase 11 from Arabidopsis thaliana (Mouse-ear cress).